The sequence spans 192 residues: Large ribosomal subunit protein uL5 (192 aa).

This sequence belongs to the universal ribosomal protein uL5 family. In terms of assembly, part of the 50S ribosomal subunit; contacts the 5S rRNA and probably tRNA. Forms a bridge to the 30S subunit in the 70S ribosome.

Functionally, this is one of the proteins that bind and probably mediate the attachment of the 5S RNA into the large ribosomal subunit, where it forms part of the central protuberance. In the 70S ribosome it contacts protein S13 of the 30S subunit (bridge B1b), connecting the 2 subunits; this bridge is implicated in subunit movement. May contact the P site tRNA; the 5S rRNA and some of its associated proteins might help stabilize positioning of ribosome-bound tRNAs. This chain is Large ribosomal subunit protein uL5, found in Aeropyrum pernix (strain ATCC 700893 / DSM 11879 / JCM 9820 / NBRC 100138 / K1).